We begin with the raw amino-acid sequence, 338 residues long: Glycerol-3-phosphate dehydrogenase [NAD(P)+] (338 aa).

NADPH contacts are provided by S14, F15, R35, and K109. K109 and G137 together coordinate sn-glycerol 3-phosphate. An NADPH-binding site is contributed by A141. Sn-glycerol 3-phosphate contacts are provided by K192, D247, S257, R258, and N259. K192 functions as the Proton acceptor in the catalytic mechanism. Residue R258 coordinates NADPH. Positions 282 and 284 each coordinate NADPH.

The protein belongs to the NAD-dependent glycerol-3-phosphate dehydrogenase family.

The protein localises to the cytoplasm. The enzyme catalyses sn-glycerol 3-phosphate + NAD(+) = dihydroxyacetone phosphate + NADH + H(+). It catalyses the reaction sn-glycerol 3-phosphate + NADP(+) = dihydroxyacetone phosphate + NADPH + H(+). Its pathway is membrane lipid metabolism; glycerophospholipid metabolism. Its function is as follows. Catalyzes the reduction of the glycolytic intermediate dihydroxyacetone phosphate (DHAP) to sn-glycerol 3-phosphate (G3P), the key precursor for phospholipid synthesis. The polypeptide is Glycerol-3-phosphate dehydrogenase [NAD(P)+] (Rickettsia rickettsii (strain Iowa)).